We begin with the raw amino-acid sequence, 217 residues long: tRNA (guanine-N(7)-)-methyltransferase (217 aa).

S-adenosyl-L-methionine contacts are provided by glutamate 44, glutamate 69, asparagine 96, and aspartate 118. Aspartate 118 is a catalytic residue. Residue lysine 122 participates in substrate binding. The segment at 124–129 is interaction with RNA; that stretch reads RHEKRR. Substrate contacts are provided by residues aspartate 154 and 191 to 194; that span reads TEYE.

This sequence belongs to the class I-like SAM-binding methyltransferase superfamily. TrmB family.

The enzyme catalyses guanosine(46) in tRNA + S-adenosyl-L-methionine = N(7)-methylguanosine(46) in tRNA + S-adenosyl-L-homocysteine. Its pathway is tRNA modification; N(7)-methylguanine-tRNA biosynthesis. Its function is as follows. Catalyzes the formation of N(7)-methylguanine at position 46 (m7G46) in tRNA. This is tRNA (guanine-N(7)-)-methyltransferase from Geobacillus kaustophilus (strain HTA426).